A 230-amino-acid polypeptide reads, in one-letter code: Ubiquitin carboxyl-terminal hydrolase isozyme L3 (230 aa).

In terms of domain architecture, UCH catalytic spans 5–229; that stretch reads RWLPLEANPE…LRFNAIALSA (225 aa). Positions 8–13 are interaction with ubiquitin; sequence PLEANP. The active-site Nucleophile is the cysteine 95. At serine 130 the chain carries Phosphoserine. An interaction with ubiquitin. Crossover loop which restricts access of large ubiquitin adducts to the active site region spans residues 152–159; sequence AHEGQTEA. Histidine 169 functions as the Proton donor in the catalytic mechanism. Positions 219–224 are interaction with ubiquitin; that stretch reads ELRFNA.

It belongs to the peptidase C12 family. As to quaternary structure, preferentially binds diubiquitin; the interaction does not hydrolyze diubiquitin but, in vitro, inhibits the hydrolyzing activity on other substrates.

It localises to the cytoplasm. The catalysed reaction is Thiol-dependent hydrolysis of ester, thioester, amide, peptide and isopeptide bonds formed by the C-terminal Gly of ubiquitin (a 76-residue protein attached to proteins as an intracellular targeting signal).. Its activity is regulated as follows. Inhibited by monoubiquitin and diubiquitin. Functionally, deubiquitinating enzyme (DUB) that controls levels of cellular ubiquitin through processing of ubiquitin precursors and ubiquitinated proteins. Thiol protease that recognizes and hydrolyzes a peptide bond at the C-terminal glycine of either ubiquitin or NEDD8. Has a 10-fold preference for Arg and Lys at position P3''. Deubiquitinates ENAC in apical compartments, thereby regulating apical membrane recycling. Indirectly increases the phosphorylation of IGFIR, AKT and FOXO1 and promotes insulin-signaling and insulin-induced adipogenesis. Required for stress-response retinal, skeletal muscle and germ cell maintenance. May be involved in working memory. Can hydrolyze UBB(+1), a mutated form of ubiquitin which is not effectively degraded by the proteasome. This chain is Ubiquitin carboxyl-terminal hydrolase isozyme L3 (UCHL3), found in Bos taurus (Bovine).